We begin with the raw amino-acid sequence, 1132 residues long: Ubiquitin-associated protein 2 (1132 aa).

The segment at 1–29 is disordered; sequence MMTSVSNDRCRGAREKPQMPTAHAAQSQK. Residues 8–17 are compositionally biased toward basic and acidic residues; it reads DRCRGAREKP. Positions 48 to 92 constitute a UBA domain; sequence KNDSDFEAKVKQLMEVTGKNQDECIVALHDCNGDVNKAINILLEG. Disordered stretches follow at residues 95–202, 221–248, 331–351, 380–479, 602–679, 713–749, 875–919, 996–1033, 1040–1059, and 1087–1132; these read DTTS…YSES, GTDE…YGLK, NNQM…SPQS, LKPP…STVS, TSSA…VSTL, PLSQ…VEST, PYSG…LNPG, GGYG…GSVY, DKQG…SALG, and PHSQ…YWTN. Residues 109–130 are compositionally biased toward basic and acidic residues; that stretch reads FGRESSENKENREKRTEREASR. Position 166 is an omega-N-methylarginine (R166). Positions 168–182 are enriched in basic residues; it reads KRARGRGFGRGRGRG. Composition is skewed to polar residues over residues 233 to 244 and 331 to 340; these read HSMSQEPPSKSS and NNQMAPGTAN. Positions 341-351 are enriched in low complexity; it reads STSASSYSPQS. A compositionally biased stretch (polar residues) spans 392–404; sequence SSAQQNDTASPPA. S433 and S440 each carry phosphoserine. 2 stretches are compositionally biased toward low complexity: residues 436 to 448 and 602 to 618; these read LSQL…HQTQ and TSSA…SSSY. A compositionally biased stretch (polar residues) spans 619–630; the sequence is DQSSVHTRIAYQ. At S631 the chain carries Phosphoserine. Over residues 631-644 the composition is skewed to low complexity; the sequence is SSASPPDSAPGSVA. Residues 652-662 show a composition bias toward polar residues; the sequence is SQHTVDTTSSV. Positions 713-722 are enriched in low complexity; the sequence is PLSQLSSSLS. A compositionally biased stretch (polar residues) spans 723–742; sequence GHQNSMTSAHATRSTSTPHT. The segment covering 897–914 has biased composition (low complexity); sequence PAQAQQSQSQTHHTAQQP. Residues 1101-1115 show a composition bias toward low complexity; sequence PSGSGQRSQPSSLQP. Residues 1116 to 1132 show a composition bias toward polar residues; the sequence is KSQASKPTYGSAPYWTN.

As to quaternary structure, may interact with ANXA2.

The protein resides in the nucleus. Its subcellular location is the chromosome. It localises to the cytoplasm. Recruits the ubiquitination machinery to RNA polymerase II for polyubiquitination, removal and degradation, when the transcription-coupled nucleotide excision repair (TC-NER) machinery fails to resolve DNA damage. May promote the degradation of ANXA2. The polypeptide is Ubiquitin-associated protein 2 (Mus musculus (Mouse)).